We begin with the raw amino-acid sequence, 731 residues long: MMRDSPSIQGTLDAATQHALLAGRHADPFSVLGPHQAGAHTVVRVLAPGARTVMAVLPGGQRTPLLPMQPGLFENTVPGLQPGAPAAYRLCIEWEGGIQHTADPYAFGPVLDTAQLDHCAAGGWRYLAGLLGAHAASVDGCAGTRFALWAPNARRVAVVGDFNGWDGRRHAMRLRYPAGVWELFLPDVGPGARYKFQVLGADGHTVLKADPLARQAEAPPATASIVPDERPFAWTDEAWMEQRAARQRCDAPISIYEVHAGSWFDDAGAPRWQSLAARLPEYARSLGFTHIELLPVMAHPFGGSWGYQPLGLFAPAAAHGAPADFAHFVDRCHEAGLGVILDWVPAHFPDDAHGLARLDGTPLYEHADPHEGRHPDWNTLIYNYGRREVRAFLIASAIHWLRHYHVDGLRVDAVASMLYRDYSRPAGQWIPNRHGGRENLEAIDFLRELNAAVGVQCPGAITVAEESTAWPGVTAPVANGGLGFDYKWNMGWMHDTLRYMRRDPIHRRHHHHDLSFGMVYAYAERFVLPLSHDEVVHGKGSLLGKMPGERAAQLAQLRLYYAFMWAHPGKKLLFMGGEFGQQGEWNHDAMLQWSLLDDPAHRGLQRLVADLNHVYATLPELHCRDADPSGFAWIVGDDADNSVLAFARVDASHCLVAVCNFTPVPRPGYRFGVPHAGDWRVRVDTGATRYGGAGGGPPICLRSEPIPAHGHPQSLVLDLPGFTALYLRHSE.

The Nucleophile role is filled by Asp412. Glu465 acts as the Proton donor in catalysis.

Belongs to the glycosyl hydrolase 13 family. GlgB subfamily. As to quaternary structure, monomer.

It catalyses the reaction Transfers a segment of a (1-&gt;4)-alpha-D-glucan chain to a primary hydroxy group in a similar glucan chain.. Its pathway is glycan biosynthesis; glycogen biosynthesis. In terms of biological role, catalyzes the formation of the alpha-1,6-glucosidic linkages in glycogen by scission of a 1,4-alpha-linked oligosaccharide from growing alpha-1,4-glucan chains and the subsequent attachment of the oligosaccharide to the alpha-1,6 position. In Bordetella parapertussis (strain 12822 / ATCC BAA-587 / NCTC 13253), this protein is 1,4-alpha-glucan branching enzyme GlgB.